A 983-amino-acid chain; its full sequence is Pro-apoptotic serine protease NMA111 (983 aa).

Residues 1–40 (MSVPTKRRLSFDESTNKRFLNGTHSTENNTSNIEVDEDYG) form a disordered region. Residues 22–33 (GTHSTENNTSNI) show a composition bias toward polar residues. Residues 59–260 (WQETITKVVN…LPIYRPLRAL (202 aa)) are serine protease. Catalysis depends on charge relay system residues histidine 108, aspartate 139, and serine 222. 2 consecutive PDZ domains span residues 287–365 (RRLG…QRGG) and 867–948 (FWSG…MSFD).

The protein belongs to the peptidase S1C family.

It localises to the nucleus. Nuclear serine protease which mediates apoptosis. This chain is Pro-apoptotic serine protease NMA111 (NMA111), found in Scheffersomyces stipitis (strain ATCC 58785 / CBS 6054 / NBRC 10063 / NRRL Y-11545) (Yeast).